We begin with the raw amino-acid sequence, 95 residues long: MSVSKKDVEYVAELARLSFSEEQKEGFMEDLNSILGYVDKLSELDTDNVDIIVNPYYIENKFREDEVEESMDLKDVIKNAPKNLEEYIVVPKIID.

This sequence belongs to the GatC family. As to quaternary structure, heterotrimer of A, B and C subunits.

The catalysed reaction is L-glutamyl-tRNA(Gln) + L-glutamine + ATP + H2O = L-glutaminyl-tRNA(Gln) + L-glutamate + ADP + phosphate + H(+). It catalyses the reaction L-aspartyl-tRNA(Asn) + L-glutamine + ATP + H2O = L-asparaginyl-tRNA(Asn) + L-glutamate + ADP + phosphate + 2 H(+). Functionally, allows the formation of correctly charged Asn-tRNA(Asn) or Gln-tRNA(Gln) through the transamidation of misacylated Asp-tRNA(Asn) or Glu-tRNA(Gln) in organisms which lack either or both of asparaginyl-tRNA or glutaminyl-tRNA synthetases. The reaction takes place in the presence of glutamine and ATP through an activated phospho-Asp-tRNA(Asn) or phospho-Glu-tRNA(Gln). This is Glutamyl-tRNA(Gln) amidotransferase subunit C 1 (gatC1) from Clostridium acetobutylicum (strain ATCC 824 / DSM 792 / JCM 1419 / IAM 19013 / LMG 5710 / NBRC 13948 / NRRL B-527 / VKM B-1787 / 2291 / W).